We begin with the raw amino-acid sequence, 325 residues long: Homocysteine S-methyltransferase 2 (325 aa).

One can recognise a Hcy-binding domain in the interval leucine 6–valine 321. Residue threonine 138 is modified to Phosphothreonine. Positions 239, 306, and 307 each coordinate Zn(2+).

The cofactor is Zn(2+).

It localises to the cytoplasm. The protein localises to the nucleus. It carries out the reaction S-methyl-L-methionine + L-homocysteine = 2 L-methionine + H(+). In terms of biological role, homocysteine S-methyltransferase involved in the conversion of S-adenosylmethionine (AdoMet) to methionine to control the methionine/AdoMet ratio. Also converts S-methylmethionine (SMM) to methionine. The sequence is that of Homocysteine S-methyltransferase 2 (SAM4) from Saccharomyces cerevisiae (strain ATCC 204508 / S288c) (Baker's yeast).